The chain runs to 354 residues: UDP-N-acetylglucosamine--N-acetylmuramyl-(pentapeptide) pyrophosphoryl-undecaprenol N-acetylglucosamine transferase (354 aa).

UDP-N-acetyl-alpha-D-glucosamine-binding positions include Ser-11–Gly-13, Arg-164, Ser-194, and Gln-289.

The protein belongs to the glycosyltransferase 28 family. MurG subfamily.

Its subcellular location is the cell membrane. The catalysed reaction is di-trans,octa-cis-undecaprenyl diphospho-N-acetyl-alpha-D-muramoyl-L-alanyl-D-glutamyl-meso-2,6-diaminopimeloyl-D-alanyl-D-alanine + UDP-N-acetyl-alpha-D-glucosamine = di-trans,octa-cis-undecaprenyl diphospho-[N-acetyl-alpha-D-glucosaminyl-(1-&gt;4)]-N-acetyl-alpha-D-muramoyl-L-alanyl-D-glutamyl-meso-2,6-diaminopimeloyl-D-alanyl-D-alanine + UDP + H(+). It participates in cell wall biogenesis; peptidoglycan biosynthesis. In terms of biological role, cell wall formation. Catalyzes the transfer of a GlcNAc subunit on undecaprenyl-pyrophosphoryl-MurNAc-pentapeptide (lipid intermediate I) to form undecaprenyl-pyrophosphoryl-MurNAc-(pentapeptide)GlcNAc (lipid intermediate II). This Shouchella clausii (strain KSM-K16) (Alkalihalobacillus clausii) protein is UDP-N-acetylglucosamine--N-acetylmuramyl-(pentapeptide) pyrophosphoryl-undecaprenol N-acetylglucosamine transferase.